The chain runs to 235 residues: Isoprenyl transferase (235 aa).

Aspartate 21 is a catalytic residue. Aspartate 21 is a Mg(2+) binding site. Substrate is bound by residues 22 to 25 (GNAR), tryptophan 26, lysine 34, histidine 38, and 66 to 68 (SSE). Asparagine 69 functions as the Proton acceptor in the catalytic mechanism. Substrate contacts are provided by residues tryptophan 70, arginine 72, arginine 183, and 189 to 191 (RIS). Residue glutamate 202 coordinates Mg(2+).

It belongs to the UPP synthase family. In terms of assembly, homodimer. Mg(2+) is required as a cofactor.

Catalyzes the condensation of isopentenyl diphosphate (IPP) with allylic pyrophosphates generating different type of terpenoids. This is Isoprenyl transferase from Rickettsia conorii (strain ATCC VR-613 / Malish 7).